Here is a 131-residue protein sequence, read N- to C-terminus: MAPPKAEKKPASKAPAEKKPAAKKTASSTDAKKRTKTRKETYSSYIYKVLKQTHPDTGISQKAMSIMNSFVNDIFERIASEASKLAAYNKKSTISAREIQTAVRLILPGELAKHAVSEGTRAVTKYSSASN.

The segment covering 1-20 has biased composition (basic and acidic residues); sequence MAPPKAEKKPASKAPAEKKP. The interval 1–39 is disordered; it reads MAPPKAEKKPASKAPAEKKPAAKKTASSTDAKKRTKTRK. K8 and K9 each carry N6-acetyllysine; alternate. Residues K8 and K9 each participate in a glycyl lysine isopeptide (Lys-Gly) (interchain with G-Cter in SUMO); alternate cross-link. Residue S12 is modified to Phosphoserine. Residue K13 is modified to N6-acetyllysine. K18 is subject to N6-acetyllysine; alternate. K18 participates in a covalent cross-link: Glycyl lysine isopeptide (Lys-Gly) (interchain with G-Cter in SUMO); alternate. A Glycyl lysine isopeptide (Lys-Gly) (interchain with G-Cter in SUMO) cross-link involves residue K19. K125 participates in a covalent cross-link: Glycyl lysine isopeptide (Lys-Gly) (interchain with G-Cter in ubiquitin).

Belongs to the histone H2B family. As to quaternary structure, the nucleosome is a histone octamer containing two molecules each of H2A, H2B, H3 and H4 assembled in one H3-H4 heterotetramer and two H2A-H2B heterodimers. The octamer wraps approximately 147 bp of DNA. Monoubiquitinated to form H2BK123ub1. H2BK123ub1 gives a specific tag for epigenetic transcriptional activation and is also prerequisite for H3K4me and H3K79me formation. H2BK123ub1 also modulates the formation of double-strand breaks during meiosis and is a prerequisite for DNA-damage checkpoint activation. In terms of processing, phosphorylated by STE20 to form H2BS10ph during progression through meiotic prophase. May be correlated with chromosome condensation. Post-translationally, acetylated by GCN5 to form H2BK11ac and H2BK16ac. H2BK16ac can also be formed by ESA1. Acetylation of N-terminal lysines and particularly formation of H2BK11acK16ac has a positive effect on transcription. Sumoylation to form H2BK6su or H2BK7su, and probably also H2BK16su or H2BK17su, occurs preferentially near the telomeres and represses gene transcription.

Its subcellular location is the nucleus. It localises to the chromosome. In terms of biological role, core component of nucleosome. Nucleosomes wrap and compact DNA into chromatin, limiting DNA accessibility to the cellular machineries which require DNA as a template. Histones thereby play a central role in transcription regulation, DNA repair, DNA replication and chromosomal stability. DNA accessibility is regulated via a complex set of post-translational modifications of histones, also called histone code, and nucleosome remodeling. This chain is Histone H2B.2 (HTB2), found in Scheffersomyces stipitis (strain ATCC 58785 / CBS 6054 / NBRC 10063 / NRRL Y-11545) (Yeast).